The sequence spans 392 residues: Succinate--CoA ligase [ADP-forming] subunit beta (392 aa).

One can recognise an ATP-grasp domain in the interval K9–E248. Residues K50, G57–G59, E103, M106, and E111 each bind ATP. N203 and D217 together coordinate Mg(2+). Substrate-binding positions include N268 and G325 to V327.

It belongs to the succinate/malate CoA ligase beta subunit family. In terms of assembly, heterotetramer of two alpha and two beta subunits. Mg(2+) is required as a cofactor.

The catalysed reaction is succinate + ATP + CoA = succinyl-CoA + ADP + phosphate. It catalyses the reaction GTP + succinate + CoA = succinyl-CoA + GDP + phosphate. Its pathway is carbohydrate metabolism; tricarboxylic acid cycle; succinate from succinyl-CoA (ligase route): step 1/1. Functionally, succinyl-CoA synthetase functions in the citric acid cycle (TCA), coupling the hydrolysis of succinyl-CoA to the synthesis of either ATP or GTP and thus represents the only step of substrate-level phosphorylation in the TCA. The beta subunit provides nucleotide specificity of the enzyme and binds the substrate succinate, while the binding sites for coenzyme A and phosphate are found in the alpha subunit. In Pelodictyon phaeoclathratiforme (strain DSM 5477 / BU-1), this protein is Succinate--CoA ligase [ADP-forming] subunit beta.